Consider the following 897-residue polypeptide: MTDVTVKTLAAEIQTSVDRLVQQFADAGIPKSADDSVTAQEKQTLLSHLNREHGSAPDKLTLQRKTRSTLNVPGTGGKSKSVQIEVRKTRTFVKRDPQEAERLAAEEQAQREAEEQAQREAEITAKREAELKAEREAAEKAKRDASDKAKRDAAEKDKVSNQQTDEMTKTAQTEKARRENEAAELKRKAEEEARRKLEEDARRVAEEARRMAEENEKNGINPVEQTEDTSDYHVTTSQHARQAEDENDREVEGGRGRTRTASKTARPQKKGNKHAESKADREEARAAGRGGKGGKRKGSPLLQQGFQKPAQAVNRDVVIGETITVGDLANKMAVKGSQVIKAMMKLGAMATINQVIDQETAQLVAEEMGHKVILRRENELEEAVMSDRDTGAAAEPRAPVVTIMGHVDHGKTSLLDYIRSTKVASGEAGGITQHIGAYHVETDNGMITFLDTPGHAAFTSMRARGAQATDIVVLVVAADDGVMPQTIEAIQHAKAAQVPLVVAVNKIDKPEADMDRVKNELSQYGVMPEEWGGEAQFIPVSAKAGTGIDDLLNAILLQAEVLELKAIRNGMASGAVIESFLDKGRGPVATVLVREGTLNKGDIVLCGFEYGRVRAMRNELGQEVLEAGPSIPVEILGLSGVPAAGDEVTVVRDEKKAREVALYRQGKFREVKLARQQKSKLENMFANMTEGEVHEVNVVLKADVQGSVEAISDSLLKLSTDEVKVKIIGSGVGGITETDATLAAASNAILVGFNVRADASARKVIESESLDLRYYSVIYNLIDEVKAAMSGMLSPELKQQIIGLAEVRDVFKSPKFGAIAGCMVTEGNIKRHNPIRVLRDNVVIYEGELESLRRFKDDVNEVRNGMECGIGVKNYNDVRVGDMIEVFEIIEIQRTIA.

A disordered region spans residues E52 to A310. Residues S68–V82 are compositionally biased toward polar residues. Composition is skewed to basic and acidic residues over residues E85–V159 and E166–K217. A compositionally biased stretch (basic residues) spans G256–N272. Over residues K273–A286 the composition is skewed to basic and acidic residues. Positions P396 to K565 constitute a tr-type G domain. Residues G405–T412 form a G1 region. G405–T412 provides a ligand contact to GTP. Positions G430 to H434 are G2. The G3 stretch occupies residues D451–G454. GTP-binding positions include D451–H455 and N505–D508. The segment at N505–D508 is G4. A G5 region spans residues S541–K543.

This sequence belongs to the TRAFAC class translation factor GTPase superfamily. Classic translation factor GTPase family. IF-2 subfamily.

The protein localises to the cytoplasm. Functionally, one of the essential components for the initiation of protein synthesis. Protects formylmethionyl-tRNA from spontaneous hydrolysis and promotes its binding to the 30S ribosomal subunits. Also involved in the hydrolysis of GTP during the formation of the 70S ribosomal complex. This Enterobacter cloacae protein is Translation initiation factor IF-2 (infB).